The primary structure comprises 157 residues: Probable succinate transporter subunit YjjB (157 aa).

Helical transmembrane passes span 8–28, 57–77, 87–107, and 129–149; these read FALA…AMVF, LNIE…GIQW, VFTV…TAMI, and FLTA…PGLW.

It belongs to the ThrE exporter (TC 2.A.79) family. As to quaternary structure, the transporter is composed of YjjB and YjjP.

The protein resides in the cell inner membrane. Functionally, involved in succinate export with YjjP. Both proteins are required for export. The sequence is that of Probable succinate transporter subunit YjjB from Shigella boydii serotype 4 (strain Sb227).